The chain runs to 128 residues: L-ectoine synthase (128 aa).

The protein belongs to the ectoine synthase family.

It carries out the reaction (2S)-4-acetamido-2-aminobutanoate = L-ectoine + H2O. It participates in amine and polyamine biosynthesis; ectoine biosynthesis; L-ectoine from L-aspartate 4-semialdehyde: step 3/3. Functionally, catalyzes the circularization of gamma-N-acetyl-alpha,gamma-diaminobutyric acid (ADABA) to ectoine (1,4,5,6-tetrahydro-2-methyl-4-pyrimidine carboxylic acid), which is an excellent osmoprotectant. In Vibrio parahaemolyticus serotype O3:K6 (strain RIMD 2210633), this protein is L-ectoine synthase.